We begin with the raw amino-acid sequence, 364 residues long: DNA polymerase IV (364 aa).

Residues 14–198 (IIHIDMDAFF…LPIEKFHGVG (185 aa)) form the UmuC domain. The Mg(2+) site is built by Asp18 and Asp116. Glu117 is a catalytic residue.

Belongs to the DNA polymerase type-Y family. As to quaternary structure, monomer. It depends on Mg(2+) as a cofactor.

It is found in the cytoplasm. The catalysed reaction is DNA(n) + a 2'-deoxyribonucleoside 5'-triphosphate = DNA(n+1) + diphosphate. Functionally, poorly processive, error-prone DNA polymerase involved in untargeted mutagenesis. Copies undamaged DNA at stalled replication forks, which arise in vivo from mismatched or misaligned primer ends. These misaligned primers can be extended by PolIV. Exhibits no 3'-5' exonuclease (proofreading) activity. May be involved in translesional synthesis, in conjunction with the beta clamp from PolIII. The chain is DNA polymerase IV from Streptococcus pyogenes serotype M6 (strain ATCC BAA-946 / MGAS10394).